A 45-amino-acid chain; its full sequence is MLKYIYMHLSHKYNHILFTYNMRIYLIKRNHMLFTHMFTTYAYIM.

It belongs to the asfivirus E66L family.

It localises to the host endoplasmic reticulum. In terms of biological role, inhibits host protein translation, probably through the EIF2AK2/EIF2S1 signaling pathway. Promotes cell retention in the G0/G1 phase. The protein is Host translation inhibitor E66L of Ornithodoros (relapsing fever ticks).